Reading from the N-terminus, the 135-residue chain is HTH-type transcriptional repressor RghR (135 aa).

Residues 8-63 form the HTH cro/C1-type domain; it reads LRALREERKLTVNQLATYSGVSAAGISRIENGKRGVPKPATIKKLAEALKIPYEGL. Residues 19-38 constitute a DNA-binding region (H-T-H motif); it reads VNQLATYSGVSAAGISRIEN.

Functionally, represses the expression of yvaM and both rapG and rapH. Binds directly to the promoter regions of yvaM, rapG and rapH. The chain is HTH-type transcriptional repressor RghR (rghR) from Bacillus subtilis (strain 168).